A 422-amino-acid polypeptide reads, in one-letter code: MSSLPLRSGEKMESPSISDAVPLHAPEDATADFSQPQSPLHEVDSFPVTESSDDVVVNVSEIPNLSPSDDDFDHERNSGEDRDQDHGENPVETDGVVVPIDELNQKIIRQVEYYFSDENLPTDKFLLNAMKRNKKGFVPISTIATFHKMKKLTRDHALIVSALKESSFLVVSADEKKVKRLSPLPEIRDPKIFTVLVENLPEDHSNENIREIFGKAGSIKSVSICDPNAVEESEKGGKKENFIRTRLHAFVEYETVEAAEKAAATLNNEQDWRNGLRVKLLEQAAGKFAQRRPARREVDKEKDTTGRVHDQTGGEKNKKTREHQNHRLHHSDNPADDDGGNHQKDKNGNKGRVVGQGRRQNHQGGNGIGHGTASSSSHPNYHPVEVSKRPPGPRMPDGTRGFTMGRGKAIPPPTSTQTSHEV.

The interval 1–94 (MSSLPLRSGE…DHGENPVETD (94 aa)) is disordered. Residues 48–61 (VTESSDDVVVNVSE) show a composition bias toward low complexity. Basic and acidic residues predominate over residues 73-89 (DHERNSGEDRDQDHGEN). The region spanning 97 to 188 (VVPIDELNQK…KRLSPLPEIR (92 aa)) is the HTH La-type RNA-binding domain. One can recognise an RRM domain in the interval 193–283 (FTVLVENLPE…NGLRVKLLEQ (91 aa)). Positions 286–422 (GKFAQRRPAR…PTSTQTSHEV (137 aa)) are disordered. The span at 295–348 (RREVDKEKDTTGRVHDQTGGEKNKKTREHQNHRLHHSDNPADDDGGNHQKDKNG) shows a compositional bias: basic and acidic residues.

The protein localises to the nucleus. In terms of biological role, transcriptional regulator. This is La-related protein 6A (LARP6A) from Arabidopsis thaliana (Mouse-ear cress).